Reading from the N-terminus, the 124-residue chain is Protein MGF 110-8L (124 aa).

The N-terminal stretch at 1–16 (MKVLILVLLAVVILQA) is a signal peptide. Residues N76 and N94 are each glycosylated (N-linked (GlcNAc...) asparagine; by host).

The protein belongs to the asfivirus MGF 110 family.

Functionally, plays a role in virus cell tropism, and may be required for efficient virus replication in macrophages. The sequence is that of Protein MGF 110-8L from Ornithodoros (relapsing fever ticks).